Reading from the N-terminus, the 1410-residue chain is Condensin-1 complex subunit CAP-D2 (1410 aa).

Positions 469-480 are enriched in basic and acidic residues; it reads LEPTEHASKEST. Disordered stretches follow at residues 469–492, 504–525, 860–879, and 1208–1410; these read LEPT…DGEI, HQDS…EKDV, KTKK…NLEA, and KEQE…GSRS. Polar residues predominate over residues 869-879; the sequence is ESQNTEENLEA. Residues 1208 to 1226 show a composition bias toward basic and acidic residues; sequence KEQEETARNAEVHREKTKT. Acidic residues-rich tracts occupy residues 1240 to 1284 and 1306 to 1319; these read PVEE…EEPD and IETE…DSEP. Over residues 1323–1339 the composition is skewed to polar residues; that stretch reads QCGTTNPRSLNRKTSGD. Acidic residues predominate over residues 1342–1365; that stretch reads IETESEEEQSDSEEEPSDSEEEPD. Polar residues predominate over residues 1368–1379; the sequence is QCGTTNPRSLNQ.

The protein belongs to the CND1 (condensin subunit 1) family. In terms of assembly, component of the condensin complex. Present in buds.

Its subcellular location is the chromosome. It is found in the nucleus. Functionally, essential protein. Regulatory subunit of the condensin complex, a complex required for conversion of interphase chromatin into mitotic-like condense chromosomes. The condensin complex probably introduces positive supercoils into relaxed DNA in the presence of type I topoisomerases and converts nicked DNA into positive knotted forms in the presence of type II topoisomerases. Required for fertility, growth and euchromatin organization, but not for sister chromatid cohesion. Necessary to maintain normal structural integrity of the meiotic chromosomes during the two nuclear divisions of gametogenesis, especially to maintain compaction of the centromeric repeats and 45S rDNA. Also seems to be involved in crossover formation during meiotic prophase I. Prevents centromeric and pericentromeric heterochromatin repeats association. Contributes to the induction of stress-responsive genes in response to stress treatment. The protein is Condensin-1 complex subunit CAP-D2 of Arabidopsis thaliana (Mouse-ear cress).